The sequence spans 88 residues: Small ribosomal subunit protein bS18 (88 aa).

The protein belongs to the bacterial ribosomal protein bS18 family. Part of the 30S ribosomal subunit. Forms a tight heterodimer with protein bS6.

Binds as a heterodimer with protein bS6 to the central domain of the 16S rRNA, where it helps stabilize the platform of the 30S subunit. This chain is Small ribosomal subunit protein bS18, found in Syntrophus aciditrophicus (strain SB).